Here is a 106-residue protein sequence, read N- to C-terminus: Follitropin subunit beta (106 aa).

Disulfide bonds link C1-C49, C15-C64, C18-C102, C26-C80, C30-C82, and C85-C92. Residues N5 and N22 are each glycosylated (N-linked (GlcNAc...) asparagine).

The protein belongs to the glycoprotein hormones subunit beta family. As to quaternary structure, heterodimer. The active follitropin is a heterodimer composed of an alpha chain/CGA shared with other hormones and a unique beta chain/FSHB shown here.

The protein resides in the secreted. Functionally, together with the alpha chain CGA constitutes follitropin, the follicle-stimulating hormone, and provides its biological specificity to the hormone heterodimer. Binds FSHR, a G protein-coupled receptor, on target cells to activate downstream signaling pathways. Follitropin is involved in follicle development and spermatogenesis in reproductive organs. The protein is Follitropin subunit beta (FSHB) of Struthio camelus (Common ostrich).